We begin with the raw amino-acid sequence, 172 residues long: Adenine phosphoribosyltransferase (172 aa).

The protein belongs to the purine/pyrimidine phosphoribosyltransferase family. As to quaternary structure, homodimer.

The protein resides in the cytoplasm. The enzyme catalyses AMP + diphosphate = 5-phospho-alpha-D-ribose 1-diphosphate + adenine. Its pathway is purine metabolism; AMP biosynthesis via salvage pathway; AMP from adenine: step 1/1. Catalyzes a salvage reaction resulting in the formation of AMP, that is energically less costly than de novo synthesis. The sequence is that of Adenine phosphoribosyltransferase from Parasynechococcus marenigrum (strain WH8102).